A 314-amino-acid polypeptide reads, in one-letter code: (-)-isopiperitenone reductase (314 aa).

V10–I33 contacts NADP(+). S182 contributes to the substrate binding site.

This sequence belongs to the short-chain dehydrogenases/reductases (SDR) family.

The protein resides in the cytoplasm. The catalysed reaction is (2R,5R)-isopulegone + NADP(+) = (6R)-isopiperitenone + NADPH + H(+). The protein operates within secondary metabolite biosynthesis; terpenoid biosynthesis. Monoterpene synthase that catalyzes the specific reduction of the 1(2)-double bond of (-)-isopiperitenone to produce (+)-cis-isopulegone. Does not catalyze the reverse reaction. Unable to reduce (+)-pulegone, (+)-cis-isopulegone, (-)-menthone or the 1,2-double bond of (-)-carvone. Able to utilize NADH with 20% the efficiency of NADPH. This is (-)-isopiperitenone reductase from Mentha piperita (Peppermint).